The chain runs to 384 residues: Deoxyguanosinetriphosphate triphosphohydrolase-like protein (384 aa).

Positions 62 to 198 (RLTHSLEVST…AALADDISYI (137 aa)) constitute an HD domain.

Belongs to the dGTPase family. Type 2 subfamily.

This is Deoxyguanosinetriphosphate triphosphohydrolase-like protein from Rickettsia peacockii (strain Rustic).